Reading from the N-terminus, the 223-residue chain is V-type ATP synthase subunit D (223 aa).

The interval 203-223 (AREAEEEGGRPNPQVEIGAGL) is disordered.

This sequence belongs to the V-ATPase D subunit family.

Its function is as follows. Produces ATP from ADP in the presence of a proton gradient across the membrane. This chain is V-type ATP synthase subunit D, found in Thermus thermophilus (strain ATCC BAA-163 / DSM 7039 / HB27).